The primary structure comprises 300 residues: Protoheme IX farnesyltransferase (300 aa).

A run of 9 helical transmembrane segments spans residues 20-40 (ITKM…YFLG), 43-63 (TIDF…VGAS), 94-114 (PVAF…LYVI), 116-136 (PKTA…YTPL), 142-162 (LSVF…WVAA), 173-193 (LFMI…WWLF), 215-235 (IQII…VFGV), 241-261 (LTPV…YYAI), and 276-296 (MFAS…DKFI).

This sequence belongs to the UbiA prenyltransferase family. Protoheme IX farnesyltransferase subfamily.

Its subcellular location is the cell membrane. The catalysed reaction is heme b + (2E,6E)-farnesyl diphosphate + H2O = Fe(II)-heme o + diphosphate. It functions in the pathway porphyrin-containing compound metabolism; heme O biosynthesis; heme O from protoheme: step 1/1. Its function is as follows. Converts heme B (protoheme IX) to heme O by substitution of the vinyl group on carbon 2 of heme B porphyrin ring with a hydroxyethyl farnesyl side group. The chain is Protoheme IX farnesyltransferase from Christiangramia forsetii (strain DSM 17595 / CGMCC 1.15422 / KT0803) (Gramella forsetii).